Reading from the N-terminus, the 360-residue chain is Variable large protein 18 (360 aa).

Residues 1–26 (MRKRISAIINKLNISIMMMIVVLMIG) form the signal peptide. The N-palmitoyl cysteine moiety is linked to residue Cys-27. A lipid anchor (S-diacylglycerol cysteine) is attached at Cys-27.

This sequence belongs to the variable large protein (Vlp) family. Alpha subfamily.

Its subcellular location is the cell outer membrane. The Vlp and Vsp proteins are antigenically distinct proteins, only one vlp or vsp gene is transcriptionally active at any one time. Switching between these genes is a mechanism of host immune response evasion. This chain is Variable large protein 18, found in Borrelia hermsii.